The chain runs to 744 residues: Glucosamine inositolphosphorylceramide transferase 1 (744 aa).

3 helical membrane passes run 31–51 (FLVA…WLVV), 378–398 (SLFG…VGFV), and 460–480 (LFFC…VHFL). Residues N534, 558–563 (NSLNNR), 579–581 (DDD), R609, and 665–669 (FNCED) each bind substrate. D581 provides a ligand contact to Mn(2+). C667 and C718 are disulfide-bonded. The active site involves D669.

Belongs to the glycosyltransferase 64 family. Mn(2+) serves as cofactor. In terms of tissue distribution, highly expressed in almost all tissues.

It is found in the membrane. It participates in sphingolipid metabolism. Essential protein. Glycosyltransferase that mediates the glycosylation of glycosylinositol phosphorylceramides (GIPCs), the major sphingolipids in the plasma membrane; acts as a HexN(Ac)-specific GIPC sugar transferase. Responsible for the glycosylation of a subgroup of GIPCs found in seeds and pollen that contain GlcNAc and GlcN (GlcN(Ac)). Maybe involved in the maintenance of cell-cell adhesion. This Oryza sativa subsp. japonica (Rice) protein is Glucosamine inositolphosphorylceramide transferase 1.